The primary structure comprises 359 residues: N-acetylneuraminate-9-phosphate synthase (359 aa).

Lys61, Lys74, and Lys79 each carry N6-acetyllysine. Ser275 is modified (phosphoserine). N6-acetyllysine is present on Lys290. Positions 294–353 (SVVAKVKIPAGTTLTLDMLTVKVGEPKGYPPEDIFNLAGKKVLVTIEEDDTVMEESVESH) constitute an AFP-like domain.

As to expression, ubiquitous.

The protein localises to the cytoplasm. The enzyme catalyses aldehydo-N-acetyl-D-mannosamine 6-phosphate + phosphoenolpyruvate + H2O = N-acetylneuraminate 9-phosphate + phosphate. Functionally, catalyzes condensation of phosphoenolpyruvate (PEP) and N-acetylmannosamine 6-phosphate (ManNAc-6-P) to synthesize N-acetylneuraminate-9-phosphate (Neu5Ac-9-P). Neu5Ac-9-P is the phosphorylated forms of sialic acid N-acetylneuraminic acid (Neu5Ac). In contrast with human ortholog, has no detectable activity towards D-mannose 6-phosphate. This Mus musculus (Mouse) protein is N-acetylneuraminate-9-phosphate synthase.